The sequence spans 568 residues: PTS system lactose-specific EIICB component (568 aa).

One can recognise a PTS EIIC type-3 domain in the interval 8–409 (IEKGKPFFEK…LVDTVIYYPF (402 aa)). A run of 10 helical transmembrane segments spans residues 30-50 (GFIS…IAYV), 65-85 (MLMT…AGTT), 103-123 (INFI…AADP), 128-148 (GFLS…AAFI), 183-203 (FAFS…VIGV), 222-242 (GYLG…VGIH), 246-266 (IVEP…AHLI), 283-303 (FIVT…FMWL), 339-359 (VFFI…KFFV), and 381-401 (IVLG…LILV). One can recognise a PTS EIIB type-3 domain in the interval 465-568 (ETNVLVLCAG…LAFVEEQFKD (104 aa)). Cysteine 472 serves as the catalytic Phosphocysteine intermediate; for EIIB activity. Position 472 is a phosphocysteine; by EIIA (cysteine 472).

It is found in the cell membrane. It carries out the reaction lactose(out) + N(pros)-phospho-L-histidyl-[protein] = lactose 6-phosphate(in) + L-histidyl-[protein]. Its function is as follows. The phosphoenolpyruvate-dependent sugar phosphotransferase system (sugar PTS), a major carbohydrate active transport system, catalyzes the phosphorylation of incoming sugar substrates concomitantly with their translocation across the cell membrane. The enzyme II LacEF PTS system is involved in lactose transport. The polypeptide is PTS system lactose-specific EIICB component (Streptococcus mutans serotype c (strain ATCC 700610 / UA159)).